Reading from the N-terminus, the 621-residue chain is UvrABC system protein C (621 aa).

The region spanning 20 to 98 is the GIY-YIG domain; it reads TAPGVYRMYA…IKSLTPRYNV (79 aa). The region spanning 207–242 is the UVR domain; that stretch reads DLLAEELIQAMQVASEHLEFEQAARLRDLLTSLRSM.

The protein belongs to the UvrC family. Interacts with UvrB in an incision complex.

Its subcellular location is the cytoplasm. Functionally, the UvrABC repair system catalyzes the recognition and processing of DNA lesions. UvrC both incises the 5' and 3' sides of the lesion. The N-terminal half is responsible for the 3' incision and the C-terminal half is responsible for the 5' incision. In Xylella fastidiosa (strain M23), this protein is UvrABC system protein C.